The following is a 338-amino-acid chain: Phenylalanine--tRNA ligase alpha subunit (338 aa).

E253 lines the Mg(2+) pocket.

It belongs to the class-II aminoacyl-tRNA synthetase family. Phe-tRNA synthetase alpha subunit type 1 subfamily. As to quaternary structure, tetramer of two alpha and two beta subunits. It depends on Mg(2+) as a cofactor.

The protein localises to the cytoplasm. It carries out the reaction tRNA(Phe) + L-phenylalanine + ATP = L-phenylalanyl-tRNA(Phe) + AMP + diphosphate + H(+). This Syntrophotalea carbinolica (strain DSM 2380 / NBRC 103641 / GraBd1) (Pelobacter carbinolicus) protein is Phenylalanine--tRNA ligase alpha subunit.